Here is a 630-residue protein sequence, read N- to C-terminus: 1-deoxy-D-xylulose-5-phosphate synthase (630 aa).

Residues histidine 72 and 113–115 contribute to the thiamine diphosphate site; that span reads GHS. Position 144 (aspartate 144) interacts with Mg(2+). Thiamine diphosphate is bound by residues 145-146, asparagine 173, tyrosine 284, and glutamate 367; that span reads GA. Residue asparagine 173 coordinates Mg(2+).

It belongs to the transketolase family. DXPS subfamily. In terms of assembly, homodimer. Mg(2+) serves as cofactor. It depends on thiamine diphosphate as a cofactor.

It carries out the reaction D-glyceraldehyde 3-phosphate + pyruvate + H(+) = 1-deoxy-D-xylulose 5-phosphate + CO2. It participates in metabolic intermediate biosynthesis; 1-deoxy-D-xylulose 5-phosphate biosynthesis; 1-deoxy-D-xylulose 5-phosphate from D-glyceraldehyde 3-phosphate and pyruvate: step 1/1. Catalyzes the acyloin condensation reaction between C atoms 2 and 3 of pyruvate and glyceraldehyde 3-phosphate to yield 1-deoxy-D-xylulose-5-phosphate (DXP). In Geobacillus sp. (strain WCH70), this protein is 1-deoxy-D-xylulose-5-phosphate synthase.